The following is a 709-amino-acid chain: DNA ligase (709 aa).

The tract at residues 1–20 (MTATHRGAQADASAPAGPLP) is disordered. Residues 52-56 (DAEYD), 101-102 (SL), and E146 each bind NAD(+). K148 acts as the N6-AMP-lysine intermediate in catalysis. R169, E205, K322, and K346 together coordinate NAD(+). 4 residues coordinate Zn(2+): C440, C443, C458, and C464. Residues 623 to 709 (KAPAPLSGKT…AEAGAAPAQE (87 aa)) form the BRCT domain.

This sequence belongs to the NAD-dependent DNA ligase family. LigA subfamily. It depends on Mg(2+) as a cofactor. Mn(2+) serves as cofactor.

It catalyses the reaction NAD(+) + (deoxyribonucleotide)n-3'-hydroxyl + 5'-phospho-(deoxyribonucleotide)m = (deoxyribonucleotide)n+m + AMP + beta-nicotinamide D-nucleotide.. Functionally, DNA ligase that catalyzes the formation of phosphodiester linkages between 5'-phosphoryl and 3'-hydroxyl groups in double-stranded DNA using NAD as a coenzyme and as the energy source for the reaction. It is essential for DNA replication and repair of damaged DNA. This chain is DNA ligase, found in Cupriavidus necator (strain ATCC 17699 / DSM 428 / KCTC 22496 / NCIMB 10442 / H16 / Stanier 337) (Ralstonia eutropha).